The following is a 234-amino-acid chain: tRNA1(Val) (adenine(37)-N6)-methyltransferase (234 aa).

Belongs to the methyltransferase superfamily. tRNA (adenine-N(6)-)-methyltransferase family.

Its subcellular location is the cytoplasm. The enzyme catalyses adenosine(37) in tRNA1(Val) + S-adenosyl-L-methionine = N(6)-methyladenosine(37) in tRNA1(Val) + S-adenosyl-L-homocysteine + H(+). Its function is as follows. Specifically methylates the adenine in position 37 of tRNA(1)(Val) (anticodon cmo5UAC). In Flavobacterium psychrophilum (strain ATCC 49511 / DSM 21280 / CIP 103535 / JIP02/86), this protein is tRNA1(Val) (adenine(37)-N6)-methyltransferase.